A 298-amino-acid polypeptide reads, in one-letter code: Pyridoxal kinase PdxY (298 aa).

Residue serine 17 participates in substrate binding. Aspartate 119 and glutamate 156 together coordinate ATP. Aspartate 234 provides a ligand contact to substrate.

The protein belongs to the pyridoxine kinase family. PdxY subfamily. In terms of assembly, homodimer. Mg(2+) serves as cofactor.

The enzyme catalyses pyridoxal + ATP = pyridoxal 5'-phosphate + ADP + H(+). It functions in the pathway cofactor metabolism; pyridoxal 5'-phosphate salvage; pyridoxal 5'-phosphate from pyridoxal: step 1/1. In terms of biological role, pyridoxal kinase involved in the salvage pathway of pyridoxal 5'-phosphate (PLP). Catalyzes the phosphorylation of pyridoxal to PLP. This chain is Pyridoxal kinase PdxY, found in Deinococcus radiodurans (strain ATCC 13939 / DSM 20539 / JCM 16871 / CCUG 27074 / LMG 4051 / NBRC 15346 / NCIMB 9279 / VKM B-1422 / R1).